The following is a 322-amino-acid chain: Replication factor C small subunit 2 (322 aa).

An ATP-binding site is contributed by 44 to 51 (GPPGTGKT).

This sequence belongs to the activator 1 small subunits family. RfcS subfamily. As to quaternary structure, heteromultimer composed of small subunits (RfcS) and large subunits (RfcL).

Functionally, part of the RFC clamp loader complex which loads the PCNA sliding clamp onto DNA. The sequence is that of Replication factor C small subunit 2 from Pyrobaculum arsenaticum (strain DSM 13514 / JCM 11321 / PZ6).